A 427-amino-acid polypeptide reads, in one-letter code: Glutamate-1-semialdehyde 2,1-aminomutase (427 aa).

N6-(pyridoxal phosphate)lysine is present on lysine 265.

The protein belongs to the class-III pyridoxal-phosphate-dependent aminotransferase family. HemL subfamily. In terms of assembly, homodimer. It depends on pyridoxal 5'-phosphate as a cofactor.

The protein localises to the cytoplasm. The enzyme catalyses (S)-4-amino-5-oxopentanoate = 5-aminolevulinate. It functions in the pathway porphyrin-containing compound metabolism; protoporphyrin-IX biosynthesis; 5-aminolevulinate from L-glutamyl-tRNA(Glu): step 2/2. The protein is Glutamate-1-semialdehyde 2,1-aminomutase of Mannheimia succiniciproducens (strain KCTC 0769BP / MBEL55E).